Here is a 242-residue protein sequence, read N- to C-terminus: Neuromodulin (242 aa).

Residues Met1–Ala242 are disordered. Residues Cys3 and Cys4 are each lipidated (S-palmitoyl cysteine). The segment covering Lys9–His32 has biased composition (basic and acidic residues). Positions Ala31–Pro60 constitute an IQ domain. Ser41 is modified (phosphoserine; by PHK and PKC). Positions Ala66–Glu84 are enriched in basic and acidic residues. A compositionally biased stretch (low complexity) spans Gly85 to Pro97. Position 86 is a phosphoserine (Ser86). The segment covering Lys98 to Gly118 has biased composition (basic and acidic residues). Over residues Ala119–Pro134 the composition is skewed to low complexity. Residues Glu143–Ser158 are compositionally biased toward polar residues. Ser155, Ser157, and Ser158 each carry phosphoserine. Residues Lys159 to Gln171 are compositionally biased toward basic and acidic residues. Residues Ala172–Ala204 are compositionally biased toward low complexity. Residues Ser206 and Ser207 each carry the phosphoserine; by CK2 modification. Positions Ala209–Ala242 are enriched in basic and acidic residues.

The protein belongs to the neuromodulin family. Identified in a complex containing FGFR4, NCAM1, CDH2, PLCG1, FRS2, SRC, SHC1, GAP43 and CTTN. Interacts (via IQ domain) with calmodulin. Binds calmodulin with a greater affinity in the absence of Ca(2+) than in its presence. Phosphorylated. Phosphorylation of this protein by a protein kinase C is specifically correlated with certain forms of synaptic plasticity. In terms of processing, palmitoylated by ZDHHC3. Palmitoylation is regulated by ARF6 and is essential for plasma membrane association and axonal and dendritic filopodia induction. Deacylated by LYPLA2.

It is found in the cell membrane. The protein resides in the cell projection. It localises to the growth cone membrane. Its subcellular location is the synapse. The protein localises to the filopodium membrane. It is found in the perikaryon. The protein resides in the dendrite. It localises to the axon. Its subcellular location is the cytoplasm. Functionally, this protein is associated with nerve growth. It is a major component of the motile 'growth cones' that form the tips of elongating axons. Plays a role in axonal and dendritic filopodia induction. This is Neuromodulin (GAP43) from Bos taurus (Bovine).